The following is a 277-amino-acid chain: Sulfur carrier protein FdhD (277 aa).

The active-site Cysteine persulfide intermediate is Cys-121. 260–265 (FCKPGR) contributes to the Mo-bis(molybdopterin guanine dinucleotide) binding site.

Belongs to the FdhD family.

Its subcellular location is the cytoplasm. Functionally, required for formate dehydrogenase (FDH) activity. Acts as a sulfur carrier protein that transfers sulfur from IscS to the molybdenum cofactor prior to its insertion into FDH. The polypeptide is Sulfur carrier protein FdhD (Escherichia coli O6:H1 (strain CFT073 / ATCC 700928 / UPEC)).